The primary structure comprises 120 residues: MRRLPTREVVDMKMVVAVIRPEKLECVKKALEERGFVGMTVTEVKGRGEQKGIRLQFRGREVEVDLLQKTKVEVVVSDDAVDEVVEAIVSSARTGKFGDGRIFVIPVEKSVKIRTGDEEV.

ADP contacts are provided by residues threonine 40 and 48-50 (GEQ). ATP is bound by residues threonine 40 and 48-50 (GEQ). 2-oxoglutarate-binding positions include 48-52 (GEQKG) and lysine 69. ADP contacts are provided by residues valine 75 and 98-101 (GDGR). ATP is bound by residues valine 75 and 98 to 101 (GDGR). Glycine 98 contacts 2-oxoglutarate.

It belongs to the P(II) protein family. Homotrimer. Interacts and forms a complex with Amt3.

The protein localises to the cytoplasm. Activity is influenced by intracellular pools of the effector molecules ATP, ADP and 2-oxoglutarate. It senses the cellular nitrogen status through 2-oxoglutarate, and the energy level of the cell by binding both ATP and ADP with different affinities. ATP and 2-oxoglutarate prohibit binding to Amt3. ADP promotes the complex formation. Its function is as follows. Involved in the regulation of nitrogen metabolism. Regulates the activity of its targets by protein-protein interaction in response to the nitrogen status of the cell. Regulates the activity of the ammonia channel Amt3 via direct interaction. The protein is Nitrogen regulatory protein GlnK3 of Archaeoglobus fulgidus (strain ATCC 49558 / DSM 4304 / JCM 9628 / NBRC 100126 / VC-16).